The chain runs to 380 residues: Cytochrome b (380 aa).

Helical transmembrane passes span 34 to 54 (FGSL…LLAM), 78 to 99 (WLIR…FLHI), 114 to 134 (WNTG…GYVL), and 179 to 199 (FFAL…IHLT). The heme b site is built by His84 and His98. Residues His183 and His197 each contribute to the heme b site. His202 provides a ligand contact to a ubiquinone. The next 4 membrane-spanning stretches (helical) occupy residues 227–247 (IKDI…ALFS), 289–309 (LGGV…PFLH), 321–341 (LSQT…WIGS), and 348–368 (FIII…ILFP).

This sequence belongs to the cytochrome b family. In terms of assembly, the cytochrome bc1 complex contains 11 subunits: 3 respiratory subunits (MT-CYB, CYC1 and UQCRFS1), 2 core proteins (UQCRC1 and UQCRC2) and 6 low-molecular weight proteins (UQCRH/QCR6, UQCRB/QCR7, UQCRQ/QCR8, UQCR10/QCR9, UQCR11/QCR10 and a cleavage product of UQCRFS1). This cytochrome bc1 complex then forms a dimer. Heme b serves as cofactor.

Its subcellular location is the mitochondrion inner membrane. In terms of biological role, component of the ubiquinol-cytochrome c reductase complex (complex III or cytochrome b-c1 complex) that is part of the mitochondrial respiratory chain. The b-c1 complex mediates electron transfer from ubiquinol to cytochrome c. Contributes to the generation of a proton gradient across the mitochondrial membrane that is then used for ATP synthesis. This Coturnix japonica (Japanese quail) protein is Cytochrome b (MT-CYB).